The primary structure comprises 130 residues: 3-aminoacrylate deaminase RutC (130 aa).

The protein belongs to the RutC family.

The catalysed reaction is (Z)-3-aminoacrylate + H2O + H(+) = 3-oxopropanoate + NH4(+). In terms of biological role, involved in pyrimidine catabolism. Catalyzes the deamination of 3-aminoacrylate to malonic semialdehyde, a reaction that can also occur spontaneously. RutC may facilitate the reaction and modulate the metabolic fitness, rather than catalyzing essential functions. The sequence is that of 3-aminoacrylate deaminase RutC from Klebsiella variicola (strain At-22).